Consider the following 157-residue polypeptide: MADEALFQFLHSEIIQYVNSAETGESENGRCVSKLENMGFRVGQGLIERFTKDTPRFKDELDVMKFICKDFWTSVFKKQIDNLRTNHQGIYVLQDNKFRLLTQLSAGKQYLEHAPKFLAFTCGLVRGALSNIGVKSIVTAEVSVMPACKFQVMIQKM.

This sequence belongs to the TRAPP small subunits family. BET3 subfamily. Homodimer. Part of a TRAPP complex.

It localises to the golgi apparatus. The protein resides in the cis-Golgi network. The protein localises to the endoplasmic reticulum. Component of a transport protein particle (TRAPP) complex that may function in specific stages of inter-organelle traffic. Specifically involved in the early development of neural circuitry, likely by controlling the frequency and amplitude of intracellular calcium transients implicated in the regulation of neuron differentiation and survival. The protein is Trafficking protein particle complex subunit 6b of Danio rerio (Zebrafish).